A 332-amino-acid polypeptide reads, in one-letter code: D-alanine--D-alanine ligase (332 aa).

The ATP-grasp domain occupies 124–329; it reads KMWFSALNIP…FPDYLLSNIN (206 aa). 154–209 lines the ATP pocket; that stretch reads ALVNWGSIFVKAASQGSSVGCYRIDNQEDVASTLAQAFTYSDYVIVEKTISARELE. Mg(2+) is bound by residues aspartate 283, glutamate 296, and asparagine 298.

This sequence belongs to the D-alanine--D-alanine ligase family. Requires Mg(2+) as cofactor. Mn(2+) is required as a cofactor.

The protein localises to the cytoplasm. The enzyme catalyses 2 D-alanine + ATP = D-alanyl-D-alanine + ADP + phosphate + H(+). The protein operates within cell wall biogenesis; peptidoglycan biosynthesis. Its function is as follows. Cell wall formation. The protein is D-alanine--D-alanine ligase of Shewanella piezotolerans (strain WP3 / JCM 13877).